Consider the following 214-residue polypeptide: Orotate phosphoribosyltransferase (214 aa).

Lys26 contacts 5-phospho-alpha-D-ribose 1-diphosphate. Phe34–Phe35 contributes to the orotate binding site. Residues Tyr72–Lys73, Arg98, Lys99, Lys102, His104, and Asp123–Ser131 each bind 5-phospho-alpha-D-ribose 1-diphosphate. Residues Ser127 and Arg155 each coordinate orotate.

This sequence belongs to the purine/pyrimidine phosphoribosyltransferase family. PyrE subfamily. In terms of assembly, homodimer. The cofactor is Mg(2+).

It catalyses the reaction orotidine 5'-phosphate + diphosphate = orotate + 5-phospho-alpha-D-ribose 1-diphosphate. Its pathway is pyrimidine metabolism; UMP biosynthesis via de novo pathway; UMP from orotate: step 1/2. Catalyzes the transfer of a ribosyl phosphate group from 5-phosphoribose 1-diphosphate to orotate, leading to the formation of orotidine monophosphate (OMP). This chain is Orotate phosphoribosyltransferase, found in Chromobacterium violaceum (strain ATCC 12472 / DSM 30191 / JCM 1249 / CCUG 213 / NBRC 12614 / NCIMB 9131 / NCTC 9757 / MK).